The sequence spans 210 residues: Na(+)-translocating NADH-quinone reductase subunit D (210 aa).

The next 6 helical transmembrane spans lie at 14–34, 42–62, 72–92, 103–123, 131–151, and 178–198; these read PIVN…ALAV, LVMA…ISLI, IIVQ…LLQA, VFVG…AYAM, FMDG…VGFV, and NGML…IWII.

The protein belongs to the NqrDE/RnfAE family. Composed of six subunits; NqrA, NqrB, NqrC, NqrD, NqrE and NqrF.

Its subcellular location is the cell inner membrane. It carries out the reaction a ubiquinone + n Na(+)(in) + NADH + H(+) = a ubiquinol + n Na(+)(out) + NAD(+). NQR complex catalyzes the reduction of ubiquinone-1 to ubiquinol by two successive reactions, coupled with the transport of Na(+) ions from the cytoplasm to the periplasm. NqrA to NqrE are probably involved in the second step, the conversion of ubisemiquinone to ubiquinol. This Shewanella putrefaciens (strain CN-32 / ATCC BAA-453) protein is Na(+)-translocating NADH-quinone reductase subunit D.